A 251-amino-acid chain; its full sequence is Pyrroline-5-carboxylate reductase (251 aa).

This sequence belongs to the pyrroline-5-carboxylate reductase family.

The protein localises to the cytoplasm. It carries out the reaction L-proline + NADP(+) = (S)-1-pyrroline-5-carboxylate + NADPH + 2 H(+). The enzyme catalyses L-proline + NAD(+) = (S)-1-pyrroline-5-carboxylate + NADH + 2 H(+). It functions in the pathway amino-acid biosynthesis; L-proline biosynthesis; L-proline from L-glutamate 5-semialdehyde: step 1/1. Functionally, catalyzes the reduction of 1-pyrroline-5-carboxylate (PCA) to L-proline. This Methanobrevibacter smithii protein is Pyrroline-5-carboxylate reductase (proC).